The following is a 113-amino-acid chain: MEILMAVLAGIIFMAATYLLLSKSLLRVIIGTALLSHGVHLMLLTMGGLKKGAAPILSEHAKSFVDPLPQALILTAIVISFGVTSFILVMAFRAYQELKSDDMDQMRGNDQHE.

The next 3 helical transmembrane spans lie at 4 to 21 (LMAVLAGIIFMAATYLLL), 28 to 47 (VIIGTALLSHGVHLMLLTMG), and 67 to 89 (PLPQALILTAIVISFGVTSFILV).

This sequence belongs to the CPA3 antiporters (TC 2.A.63) subunit C family. Forms a heterooligomeric complex that consists of seven subunits: MrpA, MrpB, MrpC, MrpD, MrpE, MrpF and MrpG.

Its subcellular location is the cell membrane. Mrp complex is a Na(+)/H(+) antiporter that is considered to be the major Na(+) excretion system in B.subtilis. Has a major role in Na(+) resistance and a minor role in Na(+)- and K(+)-dependent pH homeostasis as compared to TetB. MrpA may be the actual Na(+)/H(+) antiporter, although the six other Mrp proteins are all required for Na(+)/H(+) antiport activity and Na(+) resistance. MrpA is required for initiation of sporulation when external Na(+) concentration increases. Also transports Li(+) but not K(+), Ca(2+) or Mg(2+). The protein is Na(+)/H(+) antiporter subunit C (mrpC) of Bacillus subtilis (strain 168).